The following is a 228-amino-acid chain: MLTTGSKNLDALLGGGIDKGILTQVYGPFATGKTTLAMQIGLLNEGKVAYIDTEGGFSPERLAKMVESRGMDSNSTLQKFLIFEAFDFKEQKKTISNLKKIVNEKFSMIVVDSITNHYRVEEKKSSMTTDLGKQLQVLLWLARKYNLAVIVTNQVYFDSKQNALKPLAEHIMGYKCKDILRLEKLRPGLRIAVLERHRFKPEGGIVHFEITDKGIEDIEKIKSSQTTL.

Belongs to the eukaryotic RecA-like protein family. RadB subfamily.

In terms of biological role, involved in DNA repair and in homologous recombination. May regulate the cleavage reactions of the branch-structured DNA. Has a very weak ATPase activity that is not stimulated by DNA. Binds DNA but does not promote DNA strands exchange. The protein is DNA repair and recombination protein RadB of Thermococcus sibiricus (strain DSM 12597 / MM 739).